A 239-amino-acid polypeptide reads, in one-letter code: Ribosomal RNA small subunit methyltransferase G (239 aa).

S-adenosyl-L-methionine contacts are provided by residues Gly-78, Phe-83, 129–130 (AE), and Arg-148.

The protein belongs to the methyltransferase superfamily. RNA methyltransferase RsmG family.

The protein resides in the cytoplasm. Functionally, specifically methylates the N7 position of a guanine in 16S rRNA. The sequence is that of Ribosomal RNA small subunit methyltransferase G from Clostridium botulinum (strain Alaska E43 / Type E3).